A 180-amino-acid polypeptide reads, in one-letter code: Endoribonuclease YbeY (180 aa).

Zn(2+)-binding residues include H149, H153, and H159.

Belongs to the endoribonuclease YbeY family. Zn(2+) is required as a cofactor.

It localises to the cytoplasm. Its function is as follows. Single strand-specific metallo-endoribonuclease involved in late-stage 70S ribosome quality control and in maturation of the 3' terminus of the 16S rRNA. The protein is Endoribonuclease YbeY of Prochlorococcus marinus (strain MIT 9515).